A 680-amino-acid chain; its full sequence is UvrABC system protein B (680 aa).

A Helicase ATP-binding domain is found at 27-192; sequence SNIEAGVTDQ…ERNDYDFHRG (166 aa). 40–47 is an ATP binding site; sequence GVTGSGKT. A Beta-hairpin motif is present at residues 93–116; that stretch reads YYDYYQPEAYVPSSDTYIEKDSSI. The Helicase C-terminal domain occupies 432–594; the sequence is QVDDLLGECR…IVPATIRKAV (163 aa). The region spanning 637–672 is the UVR domain; it reads AKQIQQLERDMREAAKELEFERAAELRDRIRLLREH.

It belongs to the UvrB family. As to quaternary structure, forms a heterotetramer with UvrA during the search for lesions. Interacts with UvrC in an incision complex.

The protein localises to the cytoplasm. Its function is as follows. The UvrABC repair system catalyzes the recognition and processing of DNA lesions. A damage recognition complex composed of 2 UvrA and 2 UvrB subunits scans DNA for abnormalities. Upon binding of the UvrA(2)B(2) complex to a putative damaged site, the DNA wraps around one UvrB monomer. DNA wrap is dependent on ATP binding by UvrB and probably causes local melting of the DNA helix, facilitating insertion of UvrB beta-hairpin between the DNA strands. Then UvrB probes one DNA strand for the presence of a lesion. If a lesion is found the UvrA subunits dissociate and the UvrB-DNA preincision complex is formed. This complex is subsequently bound by UvrC and the second UvrB is released. If no lesion is found, the DNA wraps around the other UvrB subunit that will check the other stand for damage. The protein is UvrABC system protein B of Nitratidesulfovibrio vulgaris (strain DSM 19637 / Miyazaki F) (Desulfovibrio vulgaris).